A 419-amino-acid polypeptide reads, in one-letter code: Serine hydroxymethyltransferase (419 aa).

(6S)-5,6,7,8-tetrahydrofolate contacts are provided by residues Leu121 and 125-127 (GHL). Lys230 bears the N6-(pyridoxal phosphate)lysine mark. 355-357 (SPF) lines the (6S)-5,6,7,8-tetrahydrofolate pocket.

This sequence belongs to the SHMT family. Homodimer. The cofactor is pyridoxal 5'-phosphate.

It is found in the cytoplasm. The catalysed reaction is (6R)-5,10-methylene-5,6,7,8-tetrahydrofolate + glycine + H2O = (6S)-5,6,7,8-tetrahydrofolate + L-serine. It participates in one-carbon metabolism; tetrahydrofolate interconversion. It functions in the pathway amino-acid biosynthesis; glycine biosynthesis; glycine from L-serine: step 1/1. Catalyzes the reversible interconversion of serine and glycine with tetrahydrofolate (THF) serving as the one-carbon carrier. This reaction serves as the major source of one-carbon groups required for the biosynthesis of purines, thymidylate, methionine, and other important biomolecules. Also exhibits THF-independent aldolase activity toward beta-hydroxyamino acids, producing glycine and aldehydes, via a retro-aldol mechanism. The polypeptide is Serine hydroxymethyltransferase (Streptococcus equi subsp. zooepidemicus (strain H70)).